We begin with the raw amino-acid sequence, 286 residues long: Aquaporin NIP1-3 (286 aa).

Residues 1–44 (MAGGEHGVNGQHEETRAMEEGSRDHQARCENSEQDGGSKSSSNN) form a disordered region. Residues 11 to 31 (QHEETRAMEEGSRDHQARCEN) show a composition bias toward basic and acidic residues. Over residues 34 to 44 (QDGGSKSSSNN) the composition is skewed to polar residues. 2 helical membrane passes run 56 to 76 (VIAE…AVAV) and 84 to 104 (VTFP…VYSV). Positions 113 to 115 (NPA) match the NPA 1 motif. The next 3 membrane-spanning stretches (helical) occupy residues 131 to 153 (VPAY…RALF), 172 to 192 (SLAM…GVAT), and 200 to 220 (LAGL…GPIS). An NPA 2 motif is present at residues 225 to 227 (NPA). The helical transmembrane segment at 239–259 (YTGIWVYIAGPVFGAVAGAWA) threads the bilayer.

It belongs to the MIP/aquaporin (TC 1.A.8) family. NIP (TC 1.A.8.12) subfamily.

The protein localises to the membrane. Aquaporins facilitate the transport of water and small neutral solutes across cell membranes. The sequence is that of Aquaporin NIP1-3 (NIP1-3) from Oryza sativa subsp. japonica (Rice).